The primary structure comprises 311 residues: Probable cell division protein WhiA (311 aa).

The segment at residues 277–311 (TLKEVADQIPDGPISKSGVNHRFKKLHELAETLKE) is a DNA-binding region (H-T-H motif).

The protein belongs to the WhiA family.

Its function is as follows. Involved in cell division and chromosome segregation. This Lactobacillus helveticus (strain DPC 4571) protein is Probable cell division protein WhiA.